Reading from the N-terminus, the 74-residue chain is ATP synthase subunit c (74 aa).

2 helical membrane-spanning segments follow: residues Phe8–Ile28 and Ile52–Ile72.

This sequence belongs to the ATPase C chain family. As to quaternary structure, F-type ATPases have 2 components, F(1) - the catalytic core - and F(0) - the membrane proton channel. F(1) has five subunits: alpha(3), beta(3), gamma(1), delta(1), epsilon(1). F(0) has three main subunits: a(1), b(2) and c(10-14). The alpha and beta chains form an alternating ring which encloses part of the gamma chain. F(1) is attached to F(0) by a central stalk formed by the gamma and epsilon chains, while a peripheral stalk is formed by the delta and b chains.

The protein resides in the cell inner membrane. Functionally, f(1)F(0) ATP synthase produces ATP from ADP in the presence of a proton or sodium gradient. F-type ATPases consist of two structural domains, F(1) containing the extramembraneous catalytic core and F(0) containing the membrane proton channel, linked together by a central stalk and a peripheral stalk. During catalysis, ATP synthesis in the catalytic domain of F(1) is coupled via a rotary mechanism of the central stalk subunits to proton translocation. In terms of biological role, key component of the F(0) channel; it plays a direct role in translocation across the membrane. A homomeric c-ring of between 10-14 subunits forms the central stalk rotor element with the F(1) delta and epsilon subunits. The chain is ATP synthase subunit c from Rickettsia akari (strain Hartford).